The sequence spans 188 residues: Elongation factor P (188 aa).

This sequence belongs to the elongation factor P family.

It localises to the cytoplasm. Its pathway is protein biosynthesis; polypeptide chain elongation. Functionally, involved in peptide bond synthesis. Stimulates efficient translation and peptide-bond synthesis on native or reconstituted 70S ribosomes in vitro. Probably functions indirectly by altering the affinity of the ribosome for aminoacyl-tRNA, thus increasing their reactivity as acceptors for peptidyl transferase. The protein is Elongation factor P of Mycoplasmoides gallisepticum (strain R(low / passage 15 / clone 2)) (Mycoplasma gallisepticum).